We begin with the raw amino-acid sequence, 868 residues long: Receptor-like protein kinase At5g59670 (868 aa).

A signal peptide spans 1–22; the sequence is MESSFGLLLALLTLTIIHIVQA. Residues 23-500 lie on the Extracellular side of the membrane; that stretch reads QDPQGFISLD…PRLIKPPKKE (478 aa). N-linked (GlcNAc...) asparagine glycosylation is found at Asn-38, Asn-94, Asn-141, Asn-287, Asn-300, Asn-372, Asn-405, Asn-416, Asn-423, Asn-445, Asn-464, and Asn-471. 3 LRR repeats span residues 409–432, 433–459, and 461–481; these read PPRI…AIQS, ITQL…KMKS, and SVIN…LRKK. The chain crosses the membrane as a helical span at residues 501 to 521; sequence FPVAIVTLVVFVTVIVVLFLV. Residues 522–868 are Cytoplasmic-facing; it reads FRKKMSTIVK…LDTTAVPMAR (347 aa). A Phosphothreonine modification is found at Thr-555. Residues 564–834 form the Protein kinase domain; the sequence is KNFQRVLGKG…SMSQVIHELK (271 aa). ATP contacts are provided by residues 570–578 and Lys-592; that span reads LGKGGFGMV. Tyr-637 is modified (phosphotyrosine). The active-site Proton acceptor is Asp-689. Ser-723 carries the post-translational modification Phosphoserine. Residues Thr-724 and Thr-729 each carry the phosphothreonine modification.

It belongs to the protein kinase superfamily. Ser/Thr protein kinase family. In terms of processing, autophosphorylated on Tyr and Thr residues.

Its subcellular location is the cell membrane. It carries out the reaction L-seryl-[protein] + ATP = O-phospho-L-seryl-[protein] + ADP + H(+). The catalysed reaction is L-threonyl-[protein] + ATP = O-phospho-L-threonyl-[protein] + ADP + H(+). The enzyme catalyses L-tyrosyl-[protein] + ATP = O-phospho-L-tyrosyl-[protein] + ADP + H(+). Functionally, probable receptor with a dual specificity kinase activity acting on both serine/threonine- and tyrosine-containing substrates. In Arabidopsis thaliana (Mouse-ear cress), this protein is Receptor-like protein kinase At5g59670.